A 118-amino-acid polypeptide reads, in one-letter code: Large ribosomal subunit protein bL20 (118 aa).

The protein belongs to the bacterial ribosomal protein bL20 family.

Binds directly to 23S ribosomal RNA and is necessary for the in vitro assembly process of the 50S ribosomal subunit. It is not involved in the protein synthesizing functions of that subunit. The sequence is that of Large ribosomal subunit protein bL20 from Lactobacillus johnsonii (strain CNCM I-12250 / La1 / NCC 533).